Reading from the N-terminus, the 266-residue chain is Family of serine hydrolases 3 (266 aa).

Active-site charge relay system residues include Ser-117, Asp-180, and His-209.

This sequence belongs to the AB hydrolase 3 family.

Serine hydrolase of unknown specificity. The sequence is that of Family of serine hydrolases 3 (FSH3) from Saccharomyces cerevisiae (strain ATCC 204508 / S288c) (Baker's yeast).